The sequence spans 488 residues: Ribulose bisphosphate carboxylase large chain (488 aa).

Positions 127 and 177 each coordinate substrate. K179 functions as the Proton acceptor in the catalytic mechanism. K181 lines the substrate pocket. Mg(2+)-binding residues include K205, D207, and E208. Residue K205 is modified to N6-carboxylysine. H297 functions as the Proton acceptor in the catalytic mechanism. 3 residues coordinate substrate: R298, H330, and S382.

The protein belongs to the RuBisCO large chain family. Type I subfamily. In terms of assembly, heterohexadecamer of 8 large chains and 8 small chains. Mg(2+) is required as a cofactor.

The protein localises to the plastid. Its subcellular location is the chloroplast. It catalyses the reaction 2 (2R)-3-phosphoglycerate + 2 H(+) = D-ribulose 1,5-bisphosphate + CO2 + H2O. The catalysed reaction is D-ribulose 1,5-bisphosphate + O2 = 2-phosphoglycolate + (2R)-3-phosphoglycerate + 2 H(+). In terms of biological role, ruBisCO catalyzes two reactions: the carboxylation of D-ribulose 1,5-bisphosphate, the primary event in carbon dioxide fixation, as well as the oxidative fragmentation of the pentose substrate in the photorespiration process. Both reactions occur simultaneously and in competition at the same active site. This chain is Ribulose bisphosphate carboxylase large chain, found in Porphyridium aerugineum (Red microalga).